The sequence spans 177 residues: 3-hydroxydecanoyl-[acyl-carrier-protein] dehydratase (177 aa).

His76 is an active-site residue.

The protein belongs to the thioester dehydratase family. FabA subfamily. Homodimer.

It is found in the cytoplasm. The enzyme catalyses a (3R)-hydroxyacyl-[ACP] = a (2E)-enoyl-[ACP] + H2O. It catalyses the reaction (3R)-hydroxydecanoyl-[ACP] = (2E)-decenoyl-[ACP] + H2O. It carries out the reaction (2E)-decenoyl-[ACP] = (3Z)-decenoyl-[ACP]. The protein operates within lipid metabolism; fatty acid biosynthesis. Functionally, necessary for the introduction of cis unsaturation into fatty acids. Catalyzes the dehydration of (3R)-3-hydroxydecanoyl-ACP to E-(2)-decenoyl-ACP and then its isomerization to Z-(3)-decenoyl-ACP. Can catalyze the dehydratase reaction for beta-hydroxyacyl-ACPs with saturated chain lengths up to 16:0, being most active on intermediate chain length. The sequence is that of 3-hydroxydecanoyl-[acyl-carrier-protein] dehydratase from Haemophilus influenzae (strain PittGG).